Here is a 237-residue protein sequence, read N- to C-terminus: UPF0174 protein YaaW (237 aa).

The protein belongs to the UPF0174 family.

This chain is UPF0174 protein YaaW, found in Escherichia coli O157:H7.